The following is a 387-amino-acid chain: 3-ketoacyl-CoA thiolase (387 aa).

Catalysis depends on Cys-91, which acts as the Acyl-thioester intermediate. Catalysis depends on proton acceptor residues His-343 and Cys-373.

It belongs to the thiolase-like superfamily. Thiolase family. In terms of assembly, heterotetramer of two alpha chains (FadB) and two beta chains (FadA).

It is found in the cytoplasm. The enzyme catalyses an acyl-CoA + acetyl-CoA = a 3-oxoacyl-CoA + CoA. The protein operates within lipid metabolism; fatty acid beta-oxidation. In terms of biological role, catalyzes the final step of fatty acid oxidation in which acetyl-CoA is released and the CoA ester of a fatty acid two carbons shorter is formed. The polypeptide is 3-ketoacyl-CoA thiolase (Shewanella denitrificans (strain OS217 / ATCC BAA-1090 / DSM 15013)).